The chain runs to 630 residues: Polygalacturonase-1 non-catalytic subunit beta (630 aa).

Residues 1–27 (MHTKIHLPPCILLLLLFSLPSFNVVVG) form the signal peptide. Residues 28-108 (GDGESGNPFT…MCAPDLSPSL (81 aa)) constitute a propeptide that is removed on maturation. 6 N-linked (GlcNAc...) asparagine glycosylation sites follow: N124, N142, N256, N334, N369, and N387. Residues 398–630 (EVNGGKKVNN…ENDMTWAIAD (233 aa)) constitute a propeptide that is removed on maturation. One can recognise a BURP domain in the interval 415-629 (FFREKMLKSG…FENDMTWAIA (215 aa)).

Interacts with polygalacturonase-2 (isoenzymes PG2A and PG2B) to form heterodimers called polygalacturonase-1 (PG1). As to expression, mostly expressed in fruit pericarp. Also detected at low levels in cell wall of roots, leaves and flowers (at protein level).

Its subcellular location is the secreted. It localises to the extracellular space. The protein resides in the apoplast. The protein localises to the cell wall. Non-catalytic subunit of the polygalacturonase isozyme 1 (PG1). Necessary and sufficient to convert the polygalacturonase from its monomeric form PG2 to its heterodimeric form PG1. Seems to limit the depolymerization and solubilization of cell wall polyuronides mediated by PG2 during ripening, probably by recruiting PG2 to form PG1. This is Polygalacturonase-1 non-catalytic subunit beta (GP1) from Solanum lycopersicum (Tomato).